The sequence spans 658 residues: Endoplasmic reticulum chaperone BiP (658 aa).

The signal sequence occupies residues 1–19 (MVTMKLFALVLLVSASVFA). ATP is bound by residues 38-41 (GTTY), lysine 98, 228-230 (GGT), 294-301 (EKAKRALS), and 365-368 (GSTR). A nucleotide-binding (NBD) region spans residues 127-281 (KPYIEVDIGD…KKKTGKDVRA (155 aa)). Residues 410–420 (QDTGDLVLLDV) are interdomain linker. The substrate-binding (SBD) stretch occupies residues 421–501 (CPLTLGIETV…PRGVPQIEVT (81 aa)). The tract at residues 634–658 (KLYGGAGAPPPEGAEGAEETEKDEL) is disordered. Over residues 648–658 (EGAEETEKDEL) the composition is skewed to acidic residues. A Prevents secretion from ER motif is present at residues 655-658 (KDEL).

Belongs to the heat shock protein 70 family. As to quaternary structure, monomer and homooligomer; homooligomerization via the interdomain linker inactivates the chaperone activity and acts as a storage of hspa5/BiP molecules. Interacts with DNAJC10. Interacts with dnajb9/ERdj4; leading to recruit hspa5/BiP to ern1/ire1. Interacts with ern1/ire1; interaction takes place following interaction with dnajb9/ERdj4 and leads to inactivate ern1/IRE1.

The protein resides in the endoplasmic reticulum lumen. It carries out the reaction ATP + H2O = ADP + phosphate + H(+). With respect to regulation, the chaperone activity is regulated by ATP-induced allosteric coupling of the nucleotide-binding (NBD) and substrate-binding (SBD) domains. In the ADP-bound and nucleotide-free (apo) states, the two domains have little interaction. In contrast, in the ATP-bound state the two domains are tightly coupled, which results in drastically accelerated kinetics in both binding and release of polypeptide substrates. J domain-containing co-chaperones (dnajb9/ERdj4 or dnajc10/ERdj5) stimulate the ATPase activity and are required for efficient substrate recognition by hspa5/BiP. Homooligomerization inactivates participating hspa5/BiP protomers and probably act as reservoirs to store hspa5/BiP molecules when they are not needed by the cell. Its function is as follows. Endoplasmic reticulum chaperone that plays a key role in protein folding and quality control in the endoplasmic reticulum lumen. Involved in the correct folding of proteins and degradation of misfolded proteins via its interaction with dnajc10/ERdj5, probably to facilitate the release of dnajc10/ERdj5 from its substrate. Acts as a key repressor of the EIF2AK3/PERK and ERN1/IRE1-mediated unfolded protein response (UPR). In the unstressed endoplasmic reticulum, recruited by DNAJB9/ERdj4 to the luminal region of ERN1/IRE1, leading to disrupt the dimerization of ERN1/IRE1, thereby inactivating ERN1/IRE1. Also binds and inactivates EIF2AK3/PERK in unstressed cells. Accumulation of misfolded protein in the endoplasmic reticulum causes release of HSPA5/BiP from ERN1/IRE1 and EIF2AK3/PERK, allowing their homodimerization and subsequent activation. In Xenopus laevis (African clawed frog), this protein is Endoplasmic reticulum chaperone BiP.